Consider the following 321-residue polypeptide: Methionyl-tRNA formyltransferase (321 aa).

111–114 is a binding site for (6S)-5,6,7,8-tetrahydrofolate; that stretch reads GLLP.

Belongs to the Fmt family.

It catalyses the reaction L-methionyl-tRNA(fMet) + (6R)-10-formyltetrahydrofolate = N-formyl-L-methionyl-tRNA(fMet) + (6S)-5,6,7,8-tetrahydrofolate + H(+). In terms of biological role, attaches a formyl group to the free amino group of methionyl-tRNA(fMet). The formyl group appears to play a dual role in the initiator identity of N-formylmethionyl-tRNA by promoting its recognition by IF2 and preventing the misappropriation of this tRNA by the elongation apparatus. In Chlamydia abortus (strain DSM 27085 / S26/3) (Chlamydophila abortus), this protein is Methionyl-tRNA formyltransferase.